Reading from the N-terminus, the 375-residue chain is Chlorophyll a/b light-harvesting protein PcbC (375 aa).

Helical transmembrane passes span 40–60 (LLGA…SITV), 102–122 (YFVI…GGLF), 151–171 (LSLI…AFVA), 225–245 (IIGG…WHIL), 262–282 (AILS…GFFV), and 300–320 (GAAA…VWHA). The interval 352 to 375 (ARTFIGRGKPQPEPPKKKGLFGRG) is disordered.

Belongs to the PsbB/PsbC family. IsiA/Pcb subfamily. As to quaternary structure, the antenna complex consists of chlorophylls (a and b) and chlorophyll a/b binding proteins. Requires chlorophyll a as cofactor. Chlorophyll b serves as cofactor.

The protein localises to the cellular thylakoid membrane. Its function is as follows. The antenna complex functions as a light receptor, it captures and delivers excitation energy to photosystems II and I. The Prochlorales pcb genes are not related to higher plant LHCs. This chain is Chlorophyll a/b light-harvesting protein PcbC (pcbC), found in Prochlorothrix hollandica.